We begin with the raw amino-acid sequence, 200 residues long: Snake venom metalloproteinase hemorrhagic factor 2 (200 aa).

One can recognise a Peptidase M12B domain in the interval 4-200 (KYIELVVVAD…RKPQCILNKP (197 aa)). A Ca(2+)-binding site is contributed by Glu7. Asn70 carries an N-linked (GlcNAc...) asparagine glycan. Asp91 provides a ligand contact to Ca(2+). Intrachain disulfides connect Cys115-Cys195, Cys155-Cys179, and Cys157-Cys162. Residue His140 coordinates Zn(2+). The active site involves Glu141. His144 and His150 together coordinate Zn(2+). Ca(2+)-binding residues include Cys195 and Asn198.

It belongs to the venom metalloproteinase (M12B) family. P-I subfamily. As to quaternary structure, monomer. Zn(2+) serves as cofactor. Expressed by the venom gland.

It localises to the secreted. In terms of biological role, snake venom zinc metalloproteinase that induces weak hemorrhage and mild myonecrosis. Shows mild myotoxicity by killing myocytes. Also induces edema in the mouse footpad at doses where hemorrhage is absent. In vitro, degrades laminin, fibronectin, and type IV collagen, suggesting this toxin play a role in local tissue damage by degrading extracellular matrix, and possibly by degrading muscle extracellular matrix. Hemorrhage is not due to cytotoxicity towards endothelial cells in culture, and may only play a minor role in local bleeding characteristic of L.muta envenomations. Also induces the synthesis of several endogenous matrix metalloproteinases, which in turn, may participate in extracellular matrix degradation. The protein is Snake venom metalloproteinase hemorrhagic factor 2 of Lachesis muta muta (Bushmaster).